The following is a 364-amino-acid chain: MSGNSIGQNFVVTTFGESHGVALGCIIDGCPPGLELTEADMQHDLDRRRPGTSRYTTARREPDEVRILSGVFEGKTTGTSIGLLIENTDQRSQDYSNIKDLFRPGHADYTYQQKYGLRDYRGGGRSSARETAMRVAAGAVAKKYLKQVHGINIQGYMSQLGPISAETLDFSQIEQNAFFFPDASKLEALDEYMRELKKSGDSIGAKISVVATGVPVGLGEPVFDRLDADIAHALMGINAVKGVEIGDGFGVVTQKGSEGRDLMSPLGFESNHAGGILGGISSGQPIVAHIALKPTSSISVPGQSMTAQGEMAEVVTKGRHDPCVGIRAVPIAEAMLAIVLMDHLLRHRAQNQDVCSHTPILGMR.

A disordered region spans residues 41 to 60 (MQHDLDRRRPGTSRYTTARR). Residues Arg48 and Arg54 each contribute to the NADP(+) site. FMN is bound by residues 125–127 (RSS), 238–239 (NA), Gly278, 293–297 (KPTSS), and Arg319.

It belongs to the chorismate synthase family. As to quaternary structure, homotetramer. FMNH2 is required as a cofactor.

The catalysed reaction is 5-O-(1-carboxyvinyl)-3-phosphoshikimate = chorismate + phosphate. Its pathway is metabolic intermediate biosynthesis; chorismate biosynthesis; chorismate from D-erythrose 4-phosphate and phosphoenolpyruvate: step 7/7. Functionally, catalyzes the anti-1,4-elimination of the C-3 phosphate and the C-6 proR hydrogen from 5-enolpyruvylshikimate-3-phosphate (EPSP) to yield chorismate, which is the branch point compound that serves as the starting substrate for the three terminal pathways of aromatic amino acid biosynthesis. This reaction introduces a second double bond into the aromatic ring system. This is Chorismate synthase from Shewanella sp. (strain MR-4).